The primary structure comprises 164 residues: UPF0114 protein YqhA (164 aa).

The next 3 membrane-spanning stretches (helical) occupy residues 15-35 (LLAP…LKFF), 53-73 (LILV…LVMV), and 136-156 (LMWY…MGYL).

It belongs to the UPF0114 family.

It localises to the cell membrane. This is UPF0114 protein YqhA from Salmonella dublin (strain CT_02021853).